Reading from the N-terminus, the 421-residue chain is Medium-chain specific acyl-CoA dehydrogenase, mitochondrial (421 aa).

The N-terminal 25 residues, 1 to 25 (MAAMFRRSCRVLRSLSHFGWRSQHT), are a transit peptide targeting the mitochondrion. N6-acetyllysine is present on K79. 158-167 (YCVTEPGAGS) contributes to the FAD binding site. Residue S167 participates in octanoyl-CoA binding. K179 carries the post-translational modification N6-succinyllysine. An FAD-binding site is contributed by 191–193 (WIT). K212 is modified (N6-acetyllysine; alternate). At K212 the chain carries N6-succinyllysine; alternate. S216 serves as a coordination point for octanoyl-CoA. An N6-acetyllysine; alternate mark is found at K217, K259, and K271. N6-succinyllysine; alternate is present on residues K217, K259, and K271. Octanoyl-CoA is bound at residue D278. The residue at position 279 (K279) is an N6-acetyllysine. Residue R281 coordinates octanoyl-CoA. An N6-acetyllysine modification is found at K301. Residues 306–308 (RKT) and 316–317 (HQ) contribute to the FAD site. Octanoyl-CoA-binding residues include R349 and T351. T351 is modified (phosphothreonine). 374-378 (QVFGG) contacts FAD. E401 contacts octanoyl-CoA. E401 acts as the Proton acceptor in catalysis. 402–405 (GTAQ) serves as a coordination point for FAD.

Belongs to the acyl-CoA dehydrogenase family. In terms of assembly, homotetramer. Interacts with the heterodimeric electron transfer flavoprotein ETF. The cofactor is FAD. Post-translationally, acetylated. Could occur at proximity of the cofactor-binding sites and reduce the catalytic activity. Could be deacetylated by SIRT3.

The protein localises to the mitochondrion matrix. It catalyses the reaction a medium-chain 2,3-saturated fatty acyl-CoA + oxidized [electron-transfer flavoprotein] + H(+) = a medium-chain (2E)-enoyl-CoA + reduced [electron-transfer flavoprotein]. The catalysed reaction is pentanoyl-CoA + oxidized [electron-transfer flavoprotein] + H(+) = (2E)-pentenoyl-CoA + reduced [electron-transfer flavoprotein]. The enzyme catalyses hexanoyl-CoA + oxidized [electron-transfer flavoprotein] + H(+) = (2E)-hexenoyl-CoA + reduced [electron-transfer flavoprotein]. It carries out the reaction octanoyl-CoA + oxidized [electron-transfer flavoprotein] + H(+) = (2E)-octenoyl-CoA + reduced [electron-transfer flavoprotein]. It catalyses the reaction decanoyl-CoA + oxidized [electron-transfer flavoprotein] + H(+) = (2E)-decenoyl-CoA + reduced [electron-transfer flavoprotein]. The catalysed reaction is dodecanoyl-CoA + oxidized [electron-transfer flavoprotein] + H(+) = (2E)-dodecenoyl-CoA + reduced [electron-transfer flavoprotein]. The enzyme catalyses tetradecanoyl-CoA + oxidized [electron-transfer flavoprotein] + H(+) = (2E)-tetradecenoyl-CoA + reduced [electron-transfer flavoprotein]. It carries out the reaction oxidized [electron-transfer flavoprotein] + hexadecanoyl-CoA + H(+) = (2E)-hexadecenoyl-CoA + reduced [electron-transfer flavoprotein]. The protein operates within lipid metabolism; mitochondrial fatty acid beta-oxidation. In terms of biological role, medium-chain specific acyl-CoA dehydrogenase is one of the acyl-CoA dehydrogenases that catalyze the first step of mitochondrial fatty acid beta-oxidation, an aerobic process breaking down fatty acids into acetyl-CoA and allowing the production of energy from fats. The first step of fatty acid beta-oxidation consists in the removal of one hydrogen from C-2 and C-3 of the straight-chain fatty acyl-CoA thioester, resulting in the formation of trans-2-enoyl-CoA. Electron transfer flavoprotein (ETF) is the electron acceptor that transfers electrons to the main mitochondrial respiratory chain via ETF-ubiquinone oxidoreductase (ETF dehydrogenase). Among the different mitochondrial acyl-CoA dehydrogenases, medium-chain specific acyl-CoA dehydrogenase acts specifically on acyl-CoAs with saturated 6 to 12 carbons long primary chains. This chain is Medium-chain specific acyl-CoA dehydrogenase, mitochondrial, found in Sus scrofa (Pig).